The following is a 190-amino-acid chain: Potassium-transporting ATPase KdpC subunit (190 aa).

Residues 10-30 traverse the membrane as a helical segment; that stretch reads TFLFLLLITGGVYPLLTTALG.

The protein belongs to the KdpC family. In terms of assembly, the system is composed of three essential subunits: KdpA, KdpB and KdpC.

The protein resides in the cell inner membrane. Its function is as follows. Part of the high-affinity ATP-driven potassium transport (or Kdp) system, which catalyzes the hydrolysis of ATP coupled with the electrogenic transport of potassium into the cytoplasm. This subunit acts as a catalytic chaperone that increases the ATP-binding affinity of the ATP-hydrolyzing subunit KdpB by the formation of a transient KdpB/KdpC/ATP ternary complex. The chain is Potassium-transporting ATPase KdpC subunit from Escherichia coli O7:K1 (strain IAI39 / ExPEC).